The following is a 340-amino-acid chain: Phosphoribosylformylglycinamidine cyclo-ligase (340 aa).

It belongs to the AIR synthase family.

The protein resides in the cytoplasm. The catalysed reaction is 2-formamido-N(1)-(5-O-phospho-beta-D-ribosyl)acetamidine + ATP = 5-amino-1-(5-phospho-beta-D-ribosyl)imidazole + ADP + phosphate + H(+). It functions in the pathway purine metabolism; IMP biosynthesis via de novo pathway; 5-amino-1-(5-phospho-D-ribosyl)imidazole from N(2)-formyl-N(1)-(5-phospho-D-ribosyl)glycinamide: step 2/2. The sequence is that of Phosphoribosylformylglycinamidine cyclo-ligase from Streptococcus pneumoniae serotype 19F (strain G54).